The following is a 93-amino-acid chain: Islet amyloid polypeptide (93 aa).

An N-terminal signal peptide occupies residues 1–23 (MRCISRLPAVLLILSVALGHLRA). Positions 24 to 35 (TPVGSGTNPQVD) are excised as a propeptide. A disulfide bridge links C39 with C44. A Tyrosine amide modification is found at Y74. A propeptide spanning residues 78–93 (NVAEDPNRESLDFLLL) is cleaved from the precursor.

The protein belongs to the calcitonin family. In terms of assembly, can form homodimers. Interacts with IDE and INS. Interaction with INS inhibits homodimerization and fibril formation. In terms of tissue distribution, abundant in the islets of Langerhans but is not present in the brain or seven other tissues examined.

It localises to the secreted. Its function is as follows. Amylin/IAPP is a glucoregulatory peptide hormone that plays an important role in the regulation of energy homeostasis. Selectively inhibits insulin-stimulated glucose utilization and glycogen deposition in muscle, while not affecting adipocyte glucose metabolism. IAPP function is mediated by the CALCR-RAMPs (AMYRs) receptor complexes. Amylin can also bind CALCR receptor in the absence of RAMPs, although it is more selective for AMYRs. The sequence is that of Islet amyloid polypeptide from Rattus norvegicus (Rat).